Consider the following 126-residue polypeptide: Nascent polypeptide-associated complex protein (126 aa).

The NAC-A/B domain maps to 10-77; that stretch reads PRMMKQMQKM…AKKVAKAEEK (68 aa).

It belongs to the NAC-alpha family. In terms of assembly, homodimer. Interacts with the ribosome. Binds ribosomal RNA.

Contacts the emerging nascent chain on the ribosome. This is Nascent polypeptide-associated complex protein from Methanococcus maripaludis (strain C5 / ATCC BAA-1333).